A 180-amino-acid polypeptide reads, in one-letter code: Negative modulator of initiation of replication (180 aa).

The tract at residues 87–88 is interaction with DNA; that stretch reads AV.

The protein belongs to the SeqA family. As to quaternary structure, homodimer. Polymerizes to form helical filaments.

The protein resides in the cytoplasm. Negative regulator of replication initiation, which contributes to regulation of DNA replication and ensures that replication initiation occurs exactly once per chromosome per cell cycle. Binds to pairs of hemimethylated GATC sequences in the oriC region, thus preventing assembly of replication proteins and re-initiation at newly replicated origins. Repression is relieved when the region becomes fully methylated. This is Negative modulator of initiation of replication from Ferrimonas balearica (strain DSM 9799 / CCM 4581 / KCTC 23876 / PAT).